The following is a 152-amino-acid chain: Deoxyuridine 5'-triphosphate nucleotidohydrolase (152 aa).

Substrate contacts are provided by residues 71 to 73, Asn84, 88 to 90, and Met98; these read RSG and LID.

The protein belongs to the dUTPase family. Mg(2+) serves as cofactor.

The catalysed reaction is dUTP + H2O = dUMP + diphosphate + H(+). It functions in the pathway pyrimidine metabolism; dUMP biosynthesis; dUMP from dCTP (dUTP route): step 2/2. In terms of biological role, this enzyme is involved in nucleotide metabolism: it produces dUMP, the immediate precursor of thymidine nucleotides and it decreases the intracellular concentration of dUTP so that uracil cannot be incorporated into DNA. The sequence is that of Deoxyuridine 5'-triphosphate nucleotidohydrolase from Shewanella putrefaciens (strain CN-32 / ATCC BAA-453).